The chain runs to 407 residues: Probable 2,3-bisphosphoglycerate-independent phosphoglycerate mutase (407 aa).

The segment at 175-200 is disordered; the sequence is GSDAINDTDPQQVGKEPLEPKGENPN.

The protein belongs to the BPG-independent phosphoglycerate mutase family. A-PGAM subfamily.

The catalysed reaction is (2R)-2-phosphoglycerate = (2R)-3-phosphoglycerate. It functions in the pathway carbohydrate degradation; glycolysis; pyruvate from D-glyceraldehyde 3-phosphate: step 3/5. In terms of biological role, catalyzes the interconversion of 2-phosphoglycerate and 3-phosphoglycerate. This Aquifex aeolicus (strain VF5) protein is Probable 2,3-bisphosphoglycerate-independent phosphoglycerate mutase.